A 287-amino-acid polypeptide reads, in one-letter code: uncharacterized protein (287 aa).

Residues 115–287 enclose the ATP-grasp domain; sequence SLLSKETIKS…KKFLKKKLIS (173 aa).

This is an uncharacterized protein from Mycoplasma genitalium (strain ATCC 33530 / DSM 19775 / NCTC 10195 / G37) (Mycoplasmoides genitalium).